A 781-amino-acid polypeptide reads, in one-letter code: DNA polymerase (781 aa).

The protein belongs to the DNA polymerase type-B family.

The enzyme catalyses DNA(n) + a 2'-deoxyribonucleoside 5'-triphosphate = DNA(n+1) + diphosphate. The protein is DNA polymerase (pol) of Archaeoglobus fulgidus (strain ATCC 49558 / DSM 4304 / JCM 9628 / NBRC 100126 / VC-16).